A 130-amino-acid polypeptide reads, in one-letter code: Sigma-w pathway protein YsdB (130 aa).

A helical transmembrane segment spans residues 2–22 (FVMVLRIILLALFAYCIYAVV).

It is found in the membrane. Its function is as follows. May mediate a negative feedback loop that down-regulates the expression of the sigma-W regulon following the activation of sigma-W in response to conditions of cell envelope stress. Might interact with and inhibit the activity of the protease PrsW, or could bind to the anti-sigma-W factor RsiW and thereby protect it from PrsW-mediated cleavage. In Bacillus subtilis (strain 168), this protein is Sigma-w pathway protein YsdB (ysdB).